The sequence spans 229 residues: NAD(P)H-hydrate epimerase (229 aa).

The YjeF N-terminal domain maps to alanine 10–leucine 217. Position 60-64 (asparagine 60–aspartate 64) interacts with (6S)-NADPHX. 2 residues coordinate K(+): asparagine 61 and aspartate 125. (6S)-NADPHX-binding positions include glycine 129 to proline 135 and aspartate 158. Serine 161 is a K(+) binding site.

The protein belongs to the NnrE/AIBP family. It depends on K(+) as a cofactor.

The catalysed reaction is (6R)-NADHX = (6S)-NADHX. The enzyme catalyses (6R)-NADPHX = (6S)-NADPHX. Functionally, catalyzes the epimerization of the S- and R-forms of NAD(P)HX, a damaged form of NAD(P)H that is a result of enzymatic or heat-dependent hydration. This is a prerequisite for the S-specific NAD(P)H-hydrate dehydratase to allow the repair of both epimers of NAD(P)HX. The protein is NAD(P)H-hydrate epimerase of Drosophila mojavensis (Fruit fly).